Here is a 338-residue protein sequence, read N- to C-terminus: Citramalyl-CoA lyase, mitochondrial (338 aa).

The transit peptide at 1 to 20 (MALCVLQNAVRGAAALPRLK) directs the protein to the mitochondrion. Substrate is bound by residues Tyr-48, Lys-55, and Lys-59. Residues Lys-55, Lys-59, and Lys-64 each carry the N6-acetyllysine modification. N6-acetyllysine; alternate occurs at positions 80 and 90. N6-succinyllysine; alternate occurs at positions 80 and 90. Arg-105 lines the substrate pocket. 2 residues coordinate Mg(2+): Glu-169 and Asp-204. Residue 270–271 (IH) coordinates substrate. Position 307 is an N6-succinyllysine (Lys-307). Asp-318 is a catalytic residue.

Belongs to the HpcH/HpaI aldolase family. Citrate lyase beta subunit-like subfamily. Homotrimer. The cofactor is Mg(2+).

It is found in the mitochondrion. It catalyses the reaction glyoxylate + acetyl-CoA + H2O = (S)-malate + CoA + H(+). The catalysed reaction is propanoyl-CoA + glyoxylate + H2O = 3-methylmalate + CoA + H(+). It carries out the reaction (3S)-citramalyl-CoA = pyruvate + acetyl-CoA. The enzyme catalyses (S)-malyl-CoA + H2O = (S)-malate + CoA + H(+). In terms of biological role, mitochondrial citramalyl-CoA lyase indirectly involved in the vitamin B12 metabolism. Converts citramalyl-CoA into acetyl-CoA and pyruvate in the C5-dicarboxylate catabolism pathway. The C5-dicarboxylate catabolism pathway is required to detoxify itaconate, a vitamin B12-poisoning metabolite. Also acts as a malate synthase in vitro, converting glyoxylate and acetyl-CoA to malate. Also displays malyl-CoA thioesterase activity. Also acts as a beta-methylmalate synthase in vitro, by mediating conversion of glyoxylate and propionyl-CoA to beta-methylmalate. Also has very weak citramalate synthase activity in vitro. The chain is Citramalyl-CoA lyase, mitochondrial (Clybl) from Rattus norvegicus (Rat).